A 246-amino-acid chain; its full sequence is NAD-dependent protein deacetylase (246 aa).

The 246-residue stretch at 1-246 (MKKPDIQQLK…VIEEIVNSNS (246 aa)) folds into the Deacetylase sirtuin-type domain. Positions 25, 36, 37, 106, 108, 109, and 124 each coordinate NAD(+). Phe-36 is a nicotinamide binding site. Residues Ile-108 and Asp-109 each contribute to the nicotinamide site. The Proton acceptor role is filled by His-124. The Zn(2+) site is built by Cys-132, Cys-135, Cys-152, and Cys-155. NAD(+)-binding residues include Ser-193, Ser-194, Asn-216, and Asp-233.

It belongs to the sirtuin family. Class U subfamily. The cofactor is Zn(2+).

It is found in the cytoplasm. It catalyses the reaction N(6)-acetyl-L-lysyl-[protein] + NAD(+) + H2O = 2''-O-acetyl-ADP-D-ribose + nicotinamide + L-lysyl-[protein]. Functionally, NAD-dependent protein deacetylase which modulates the activities of several enzymes which are inactive in their acetylated form. This chain is NAD-dependent protein deacetylase, found in Staphylococcus epidermidis (strain ATCC 35984 / DSM 28319 / BCRC 17069 / CCUG 31568 / BM 3577 / RP62A).